Consider the following 308-residue polypeptide: Cis-prenyltransferase 4, chloroplastic (308 aa).

Residues 1-45 (MAFSLQLQQIFVSYTRFCSQPKSITNPLISLKLPSIHPLAFAQNA) constitute a chloroplast transit peptide. The active site involves aspartate 84.

Belongs to the UPP synthase family. Mg(2+) is required as a cofactor. Widely expressed.

Its subcellular location is the plastid. The protein localises to the chloroplast. Its function is as follows. Uses neryl diphosphate and geranyl diphosphate to catalyze the cis-prenyl chain elongation and produce polyprenyl diphosphate with a chain of 55 carbons. The polypeptide is Cis-prenyltransferase 4, chloroplastic (Solanum lycopersicum (Tomato)).